Reading from the N-terminus, the 2664-residue chain is Inositol 1,4,5-trisphosphate-gated calcium channel ITPR3 (2664 aa).

Topologically, residues 1-2227 are cytoplasmic; sequence MSEMSSFLHI…YVEGASTGVL (2227 aa). MIR domains are found at residues 113–173, 174–224, 232–288, 295–372, and 378–434; these read GDVV…LRSN, GDNV…INLF, EEVL…VEVV, GGAG…LDPT, and DSFV…IVSV. The 1D-myo-inositol 1,4,5-trisphosphate site is built by arginine 266, threonine 268, leucine 269, and arginine 270. Residues 320 to 344 are disordered; it reads NPSYKGDASDPKAAGTGAQGRTGRR. The 1D-myo-inositol 1,4,5-trisphosphate site is built by arginine 503, lysine 507, arginine 510, tyrosine 567, arginine 568, and lysine 569. Arginine 743 contacts Ca(2+). Serine 909 and serine 927 each carry phosphoserine. The Ca(2+) site is built by glutamate 1115 and glutamate 1118. 2 disordered regions span residues 1124–1158 and 1790–1850; these read KGAS…GEKS and QQET…VGER. Positions 1792–1805 are enriched in polar residues; the sequence is ETKSTVAVNMSDLG. A phosphoserine mark is found at serine 1806, serine 1825, and serine 1827. The Ca(2+) site is built by glutamate 1875 and glutamate 1939. 3 residues coordinate ATP: alanine 1989, glutamate 2142, and lysine 2145. A helical transmembrane segment spans residues 2228-2248; it reads GSPLISLLFWILICFSIAALF. Over 2249 to 2256 the chain is Extracellular; sequence TKRYSVRP. Residues 2257–2277 form a helical membrane-spanning segment; that stretch reads LIVALILRSIYYLGIGPTLNI. Topologically, residues 2278–2286 are cytoplasmic; that stretch reads LGALNLTNK. The chain crosses the membrane as a helical span at residues 2287–2304; sequence IVFVVSFVGNRGTFIRGY. At 2305–2318 the chain is on the extracellular side; sequence KAMVMDMEFLYHVG. Residues 2319–2339 form a helical membrane-spanning segment; the sequence is YILTSVLGLFAHELFYSILLF. Residues 2340 to 2361 are Cytoplasmic-facing; that stretch reads DLIYREETLFNVIKSVTRNGRS. Residues 2362 to 2382 traverse the membrane as a helical segment; that stretch reads ILLTALLALILVYLFSIVGFL. Over 2383–2489 the chain is Extracellular; it reads FLKDDFILEV…ESLFPARVVY (107 aa). Cysteines 2448 and 2454 form a disulfide. A helical transmembrane segment spans residues 2490–2510; the sequence is DLLFFFIVIIIVLNLIFGVII. Topologically, residues 2511-2664 are cytoplasmic; the sequence is DTFADLRSEK…FVDVQNCMSR (154 aa). Residues cysteine 2531 and phenylalanine 2532 each coordinate ATP. Cysteine 2531 contributes to the Zn(2+) binding site. Positions 2534 and 2551 each coordinate Zn(2+). Positions 2553, 2556, 2557, and 2558 each coordinate ATP. Histidine 2556 contributes to the Zn(2+) binding site. Residue threonine 2574 coordinates Ca(2+). Phosphoserine occurs at positions 2602 and 2663.

The protein belongs to the InsP3 receptor family. Homotetramer. Homodimer. Interacts with TRPC1, TRPC3 and TRPC4. Interacts with TRPV4. Interacts with SIGMAR1. Interacts with PML and AKT1. Interacts with IRAG2 (via coiled-coil domain). Interacts with CABP1. Interacts with TMBIM4/LFG4. Interacts with CEMIP. Interacts with TESPA1. Interacts with TMEM203. Interacts with BOK; regulates ITPR3 expression. Interacts with BCL2L10. Interacts with CHGA and CHGB. Phosphorylated by AKT1 on serine and/or threonine residues.

The protein localises to the endoplasmic reticulum membrane. The protein resides in the cytoplasmic vesicle. Its subcellular location is the secretory vesicle membrane. The enzyme catalyses Ca(2+)(in) = Ca(2+)(out). With respect to regulation, inositol 1,4,5-trisphosphate-gated calcium channel is regulated by cytosolic calcium in a biphasic manner. At low concentrations, cytosolic calcium binds at a high-affinity juxtamembrane domain (JD) calcium binding site, allowing ITPR3 to activate by escaping a low-energy resting state through an ensemble of preactivated states. At high cytosolic calcium concentrations, ITPR3 preferentially enters an inhibited state stabilized by calcium binding at a second, low-affinity cytoplasmic domain (CD) calcium binding site. Functionally, inositol 1,4,5-trisphosphate-gated calcium channel that, upon 1D-myo-inositol 1,4,5-trisphosphate binding, transports calcium from the endoplasmic reticulum lumen to cytoplasm, thus releasing the intracellular calcium and therefore participates in cellular calcium ion homeostasis. 1D-myo-inositol 1,4,5-trisphosphate binds to the ligand-free channel without altering its global conformation, yielding the low-energy resting state, then progresses through resting-to preactivated transitions to the higher energy preactivated state, which increases affinity for calcium, promoting binding of the low basal cytosolic calcium at the juxtamembrane domain (JD) site, favoring the transition through the ensemble of high-energy intermediate states along the trajectory to the fully-open activated state. Upon opening, releases calcium in the cytosol where it can bind to the low-affinity cytoplasmic domain (CD) site and stabilizes the inhibited state to terminate calcium release. This Bos taurus (Bovine) protein is Inositol 1,4,5-trisphosphate-gated calcium channel ITPR3.